The sequence spans 313 residues: Urease accessory protein UreD (313 aa).

The tract at residues 1 to 30 (MTDLSFPGQAASPGEGAGQTPSGGSGHRFD) is disordered. The span at 15–26 (EGAGQTPSGGSG) shows a compositional bias: gly residues.

Belongs to the UreD family. As to quaternary structure, ureD, UreF and UreG form a complex that acts as a GTP-hydrolysis-dependent molecular chaperone, activating the urease apoprotein by helping to assemble the nickel containing metallocenter of UreC. The UreE protein probably delivers the nickel.

It localises to the cytoplasm. Functionally, required for maturation of urease via the functional incorporation of the urease nickel metallocenter. This is Urease accessory protein UreD from Chromohalobacter salexigens (strain ATCC BAA-138 / DSM 3043 / CIP 106854 / NCIMB 13768 / 1H11).